A 195-amino-acid chain; its full sequence is Probable GTP-binding protein EngB (195 aa).

An EngB-type G domain is found at Leu22–Glu194. GTP contacts are provided by residues Gly30–Ser37, Gly56–Ser60, Asp74–Gly77, Thr141–Asp144, and Thr173–Ser175. The Mg(2+) site is built by Ser37 and Thr58.

Belongs to the TRAFAC class TrmE-Era-EngA-EngB-Septin-like GTPase superfamily. EngB GTPase family. Mg(2+) is required as a cofactor.

In terms of biological role, necessary for normal cell division and for the maintenance of normal septation. The polypeptide is Probable GTP-binding protein EngB (Thermotoga petrophila (strain ATCC BAA-488 / DSM 13995 / JCM 10881 / RKU-1)).